Consider the following 502-residue polypeptide: Glutamate--tRNA ligase (502 aa).

A 'HIGH' region motif is present at residues 12–22; that stretch reads PSPTGYLHVGG. Positions 259–263 match the 'KMSKS' region motif; the sequence is KLSKR. Residue K262 coordinates ATP.

Belongs to the class-I aminoacyl-tRNA synthetase family. Glutamate--tRNA ligase type 1 subfamily. Monomer.

The protein resides in the cytoplasm. The catalysed reaction is tRNA(Glu) + L-glutamate + ATP = L-glutamyl-tRNA(Glu) + AMP + diphosphate. Its function is as follows. Catalyzes the attachment of glutamate to tRNA(Glu) in a two-step reaction: glutamate is first activated by ATP to form Glu-AMP and then transferred to the acceptor end of tRNA(Glu). In Chlorobium phaeobacteroides (strain DSM 266 / SMG 266 / 2430), this protein is Glutamate--tRNA ligase.